Consider the following 334-residue polypeptide: Ornithine carbamoyltransferase (334 aa).

Carbamoyl phosphate-binding positions include 57 to 60, glutamine 84, arginine 108, and 135 to 138; these read STRT and HPTQ. Residues asparagine 169, aspartate 233, and 237–238 each bind L-ornithine; that span reads SM. Residues 275–276 and arginine 320 contribute to the carbamoyl phosphate site; that span reads CL.

It belongs to the aspartate/ornithine carbamoyltransferase superfamily. OTCase family.

It localises to the cytoplasm. The catalysed reaction is carbamoyl phosphate + L-ornithine = L-citrulline + phosphate + H(+). Its pathway is amino-acid biosynthesis; L-arginine biosynthesis; L-arginine from L-ornithine and carbamoyl phosphate: step 1/3. In terms of biological role, reversibly catalyzes the transfer of the carbamoyl group from carbamoyl phosphate (CP) to the N(epsilon) atom of ornithine (ORN) to produce L-citrulline. The polypeptide is Ornithine carbamoyltransferase (Aeromonas hydrophila subsp. hydrophila (strain ATCC 7966 / DSM 30187 / BCRC 13018 / CCUG 14551 / JCM 1027 / KCTC 2358 / NCIMB 9240 / NCTC 8049)).